The following is a 559-amino-acid chain: Frizzled-1 (559 aa).

The first 35 residues, 1–35 (MKHSHLLQRCSAQLCTRGSSLILSLLLSVCLSVEG), serve as a signal peptide directing secretion. Topologically, residues 36–239 (QYNGEKGISI…FAPEELNFAR (204 aa)) are extracellular. The FZ domain occupies 46–165 (PDHGYCQPIS…NGAGELCVGQ (120 aa)). Disulfide bonds link cysteine 51/cysteine 112, cysteine 59/cysteine 105, cysteine 96/cysteine 133, cysteine 122/cysteine 162, and cysteine 126/cysteine 150. N-linked (GlcNAc...) asparagine glycosylation is present at asparagine 65. The N-linked (GlcNAc...) asparagine glycan is linked to asparagine 166. The chain crosses the membrane as a helical span at residues 240–260 (IWIGIWSVLCCASTLFTVLTY). The Cytoplasmic segment spans residues 261 to 273 (LVDMKRFSYPERP). A helical transmembrane segment spans residues 274–294 (IIFLSGCYTMVAIAYIAGFLL). Residues 295 to 321 (EDKVVCNERFAEDGYKTVAQGTKKEGC) lie on the Extracellular side of the membrane. Residues 322-342 (TFLFMMLYFFSMASSIWWVIL) form a helical membrane-spanning segment. Residues 343 to 364 (SLTWFLAAGMKWGHEAIEANSQ) lie on the Cytoplasmic side of the membrane. A helical membrane pass occupies residues 365–385 (YFHLAAWAVPAIKTITILAVG). Topologically, residues 386-408 (QVDGDTLSGVCFVGINNVDALRG) are extracellular. Residues 409–429 (FVLAPLFVYLFIGTSFLLAGF) form a helical membrane-spanning segment. The Cytoplasmic portion of the chain corresponds to 430–455 (VSLFRIRTIMKHDGTKTEKLEKLMVR). Residues 456 to 476 (IGIFSVLYTVPATIVIACYFY) traverse the membrane as a helical segment. Over 477–513 (EQAFREQWEKSWISQSCKTYAIPCPSTGHPPMSPDFT) the chain is Extracellular. Residues 514-534 (VFMIKYLMTLIVGITSGFWIW) traverse the membrane as a helical segment. The Cytoplasmic portion of the chain corresponds to 535-559 (SGKTLNSWRKFYTRLTNSKQGETTV). Positions 537–542 (KTLNSW) match the Lys-Thr-X-X-X-Trp motif, mediates interaction with the PDZ domain of Dvl family members motif. Positions 557–559 (TTV) match the PDZ-binding motif.

It belongs to the G-protein coupled receptor Fz/Smo family. In terms of assembly, interacts with wnt8. In the embryo, expressed in the heart, pronephros and otic vesicles.

It localises to the cell membrane. In terms of biological role, receptor for Wnt proteins. Functions in the canonical Wnt/beta-catenin signaling pathway. The canonical Wnt/beta-catenin signaling pathway leads to the activation of disheveled proteins, inhibition of GSK-3 kinase, nuclear accumulation of beta-catenin and activation of Wnt target genes. A second signaling pathway involving PKC and calcium fluxes has been seen for some family members, but it is not yet clear if it represents a distinct pathway or if it can be integrated in the canonical pathway, as PKC seems to be required for Wnt-mediated inactivation of GSK-3 kinase. Both pathways seem to involve interactions with G-proteins. May be involved in transduction and intercellular transmission of polarity information during tissue morphogenesis and/or in differentiated tissues. This is Frizzled-1 (fzd1) from Xenopus laevis (African clawed frog).